Here is a 487-residue protein sequence, read N- to C-terminus: UDP-N-acetylmuramate--L-alanine ligase (487 aa).

Position 126–132 (126–132) interacts with ATP; that stretch reads GTHGKTT.

The protein belongs to the MurCDEF family.

The protein localises to the cytoplasm. It catalyses the reaction UDP-N-acetyl-alpha-D-muramate + L-alanine + ATP = UDP-N-acetyl-alpha-D-muramoyl-L-alanine + ADP + phosphate + H(+). Its pathway is cell wall biogenesis; peptidoglycan biosynthesis. Functionally, cell wall formation. In Proteus mirabilis (strain HI4320), this protein is UDP-N-acetylmuramate--L-alanine ligase.